The primary structure comprises 287 residues: CRISPR-associated endoribonuclease Cas6 1 (287 aa).

Belongs to the CRISPR-associated endoribonuclease Cas6 family. As to quaternary structure, part of the aCascade ribonucleoprotein complex, minimally composed of Csa2 and Cas5a, which binds crRNA. Other possible components of aCascade in strain P1 are Cas6b (SSO1437) and Csa5 (SSO1443), while SSO1399, Cas5b (SSO1400) and SSO1401 have sometimes been seen weakly associated. Csa2 is probably the major RNA-binding subunit. The Csa2-Cas5a-crRNA complex also binds target DNA homologous to crRNA, probably forming an R-loop. Purified aCascade forms a filament about 6 nm in width.

In terms of biological role, CRISPR (clustered regularly interspaced short palindromic repeat) is an adaptive immune system that provides protection against mobile genetic elements (viruses, transposable elements and conjugative plasmids). CRISPR clusters contain spacers, sequences complementary to antecedent mobile elements, and target invading nucleic acids. CRISPR clusters are transcribed and processed into CRISPR RNA (crRNA). The chain is CRISPR-associated endoribonuclease Cas6 1 (cas6a) from Saccharolobus solfataricus (strain ATCC 35092 / DSM 1617 / JCM 11322 / P2) (Sulfolobus solfataricus).